Consider the following 120-residue polypeptide: Large ribosomal subunit protein uL18 (120 aa).

It belongs to the universal ribosomal protein uL18 family. In terms of assembly, part of the 50S ribosomal subunit; part of the 5S rRNA/L5/L18/L25 subcomplex. Contacts the 5S and 23S rRNAs.

Functionally, this is one of the proteins that bind and probably mediate the attachment of the 5S RNA into the large ribosomal subunit, where it forms part of the central protuberance. This chain is Large ribosomal subunit protein uL18, found in Oleidesulfovibrio alaskensis (strain ATCC BAA-1058 / DSM 17464 / G20) (Desulfovibrio alaskensis).